The primary structure comprises 446 residues: C-type lectin domain family 18 member A (446 aa).

The first 26 residues, 1-26 (MLHPETSPGRGHLLAVLLALLGTAWA), serve as a signal peptide directing secretion. The SCP domain occupies 52-182 (LSLHNRLRSW…AAIEAFVCAY (131 aa)). The N-linked (GlcNAc...) asparagine glycan is linked to asparagine 144. In terms of domain architecture, EGF-like spans 228–261 (PRNPCRMSCQNHGRLNISTCHCHCPPGYTGRYCQ). Cystine bridges form between cysteine 236-cysteine 249, cysteine 251-cysteine 260, cysteine 327-cysteine 432, and cysteine 408-cysteine 424. Residues 306 to 433 (IDGDCFMVSS…CKTRNRYICQ (128 aa)) form the C-type lectin domain.

N-glycosylated. As to expression, dectected in all cell lines tested and in peripheral blood cells.

Its subcellular location is the secreted. The protein localises to the endoplasmic reticulum. It localises to the golgi apparatus. It is found in the endosome. Binds polysaccharides in a Ca(2+)-independent manner with a preferentially binding to fucoidan, beta-glucans and galactans. This Homo sapiens (Human) protein is C-type lectin domain family 18 member A (CLEC18A).